A 231-amino-acid chain; its full sequence is MSAKGGKKIQNARSSFDKNIAYDLAEAVEIVKRTSYAKFDASVDLVFKLNLDVRKADQQLRGSVLLPNGTGKSISVLVVTNNVEKQKLATAAGADQVVDGQTLEQKIKEDIFDFDVMVADPAMMPLLGKYGKKLGPKGLMPNPKTGTVTPTPEKAVEELKKGKANYRTDKAGVVHTLVGKVSMDTEKLVENIKTVISLIKRLKPSAVKGTYIQNIVLSATMGPGVKVKIEK.

This sequence belongs to the universal ribosomal protein uL1 family. Part of the 50S ribosomal subunit.

Functionally, binds directly to 23S rRNA. The L1 stalk is quite mobile in the ribosome, and is involved in E site tRNA release. In terms of biological role, protein L1 is also a translational repressor protein, it controls the translation of the L11 operon by binding to its mRNA. The sequence is that of Large ribosomal subunit protein uL1 from Mycoplasmopsis agalactiae (strain NCTC 10123 / CIP 59.7 / PG2) (Mycoplasma agalactiae).